We begin with the raw amino-acid sequence, 317 residues long: MAVQGFQRRLLGSLNSTPTAIPQLGLAANQTGARCLEVSIPDGLFLSLGLVSLVENVLVVATIAKNRNLHSPTYCFICCLALSDLLVSGGNVLETVVILLLEASALAARAAVVQPLDNVIDVITCSSMVSSLCFLGAIAMDRYVSIFYALRYHSIVTLPRARQAIAAIWVASVLFSTLFIAYYDHAAVLLCLVVFFLAMLVLMAVLYVHMLARACQHAQGIARLHKRQRPLHQGFGLKGAVTLTILLGIFFLCWGPFFLHLTLIVLCPQHPTCSCIFKNFNLFLTLIICNAIIDPLIYAFRRQELRRTLKEGLTCSW.

The Extracellular portion of the chain corresponds to methionine 1–glutamate 37. An N-linked (GlcNAc...) asparagine glycan is attached at asparagine 29. The helical transmembrane segment at valine 38–isoleucine 63 threads the bilayer. The Cytoplasmic segment spans residues alanine 64 to proline 72. Residues threonine 73–leucine 93 form a helical membrane-spanning segment. Residues glutamate 94–asparagine 118 lie on the Extracellular side of the membrane. The chain crosses the membrane as a helical span at residues valine 119–methionine 140. Residues aspartate 141 to glutamine 163 are Cytoplasmic-facing. A helical membrane pass occupies residues alanine 164 to tyrosine 183. Over aspartate 184–cysteine 191 the chain is Extracellular. Residues leucine 192 to leucine 211 traverse the membrane as a helical segment. Over alanine 212–alanine 240 the chain is Cytoplasmic. A helical transmembrane segment spans residues valine 241–leucine 266. The Extracellular segment spans residues cysteine 267–asparagine 279. The chain crosses the membrane as a helical span at residues phenylalanine 280–phenylalanine 300. Residues arginine 301–tryptophan 317 lie on the Cytoplasmic side of the membrane. Residue cysteine 315 is the site of S-palmitoyl cysteine attachment.

It belongs to the G-protein coupled receptor 1 family. Interacts with MGRN1, but does not undergo MGRN1-mediated ubiquitination; this interaction competes with GNAS-binding and thus inhibits agonist-induced cAMP production. Interacts with OPN3; the interaction results in a decrease in MC1R-mediated cAMP signaling and ultimately a decrease in melanin production in melanocytes.

Its subcellular location is the cell membrane. In terms of biological role, receptor for MSH (alpha, beta and gamma) and ACTH. The activity of this receptor is mediated by G proteins which activate adenylate cyclase. Mediates melanogenesis, the production of eumelanin (black/brown) and phaeomelanin (red/yellow), via regulation of cAMP signaling in melanocytes. The polypeptide is Melanocyte-stimulating hormone receptor (MC1R) (Hylobates lar (Lar gibbon)).